We begin with the raw amino-acid sequence, 343 residues long: Cytoplasmic tRNA 2-thiolation protein 1 (343 aa).

This sequence belongs to the TtcA family. CTU1/NCS6/ATPBD3 subfamily.

It localises to the cytoplasm. It participates in tRNA modification; 5-methoxycarbonylmethyl-2-thiouridine-tRNA biosynthesis. In terms of biological role, plays a central role in 2-thiolation of mcm(5)S(2)U at tRNA wobble positions of tRNA(Lys), tRNA(Glu) and tRNA(Gln). Directly binds tRNAs and probably acts by catalyzing adenylation of tRNAs, an intermediate required for 2-thiolation. It is unclear whether it acts as a sulfurtransferase that transfers sulfur from thiocarboxylated URM1 onto the uridine of tRNAs at wobble position. The polypeptide is Cytoplasmic tRNA 2-thiolation protein 1 (Drosophila yakuba (Fruit fly)).